A 253-amino-acid chain; its full sequence is uncharacterized protein (253 aa).

This sequence belongs to the A.longa ORF167/ORF288 family.

Its subcellular location is the plastid. This is an uncharacterized protein from Euglena longa (Euglenophycean alga).